Reading from the N-terminus, the 277-residue chain is MFHVKHPQREVAATRQRAVGQWPTDPYPRRLNVWPGIRDASMLDGMSAPLQKYSPCSATDKAAALALTPVSSETEARLDAYVDLLVQWQTKTNLVASSTLPQLWTRHIADSLQLLALAPQAKCWADLGSGGGFPGVVLACALADIEGARVDLVERNAKKAAFLREAVRITASPASVHLMDIGDYVDRSEDRIDCVTARALAPLQVLLGFVEPLVNKGAKALFLKGQDVEAELTEATRYWNIEPRIHSSCTGGQGRIAEFDHIERRDRRGARQAWRGS.

S-adenosyl-L-methionine-binding positions include G128, F133, 188–189, and R198; that span reads SE.

Belongs to the methyltransferase superfamily. RNA methyltransferase RsmG family.

It is found in the cytoplasm. It carries out the reaction guanosine(527) in 16S rRNA + S-adenosyl-L-methionine = N(7)-methylguanosine(527) in 16S rRNA + S-adenosyl-L-homocysteine. Functionally, specifically methylates the N7 position of guanine in position 527 of 16S rRNA. The protein is Ribosomal RNA small subunit methyltransferase G of Nitrobacter winogradskyi (strain ATCC 25391 / DSM 10237 / CIP 104748 / NCIMB 11846 / Nb-255).